The primary structure comprises 448 residues: Exodeoxyribonuclease 7 large subunit (448 aa).

Belongs to the XseA family. In terms of assembly, heterooligomer composed of large and small subunits.

The protein resides in the cytoplasm. The enzyme catalyses Exonucleolytic cleavage in either 5'- to 3'- or 3'- to 5'-direction to yield nucleoside 5'-phosphates.. Its function is as follows. Bidirectionally degrades single-stranded DNA into large acid-insoluble oligonucleotides, which are then degraded further into small acid-soluble oligonucleotides. The sequence is that of Exodeoxyribonuclease 7 large subunit from Tolumonas auensis (strain DSM 9187 / NBRC 110442 / TA 4).